A 127-amino-acid chain; its full sequence is Protein ApaG (127 aa).

Residues 3 to 127 form the ApaG domain; that stretch reads EGKKYEIAVK…FILSVPRILH (125 aa).

The chain is Protein ApaG from Nitrosospira multiformis (strain ATCC 25196 / NCIMB 11849 / C 71).